Reading from the N-terminus, the 614-residue chain is Vitamin B12 transporter BtuB (614 aa).

Residues 1–20 form the signal peptide; sequence MIKKASLLTACSVTAFSAWA. The short motif at 26–33 is the TonB box element; sequence DTLVVTAI. Residues 38-152 form the TBDR plug domain; it reads PRSTVLAPTT…IGGVVNIITT (115 aa). Residues L83, S85, N92, and 110 to 111 contribute to the cyanocob(III)alamin site; that span reads VS. Positions 155–614 constitute a TBDR beta-barrel domain; sequence EPGTEISAGW…EYTLSGSYTF (460 aa). 3 beta stranded membrane passes run 158–165, 169–178, and 184–195; these read TEISAGWG, YQNYDVSTQQ, and TRVTLLGDYAHT. D199, Q211, D213, and D215 together coordinate Ca(2+). 2 beta stranded membrane-spanning segments follow: residues 217–227 and 232–248; these read FLSKTLYGALE and DAWS…NRTN. The Ca(2+) site is built by Y249 and D250. A251 is a binding site for cyanocob(III)alamin. D261 contributes to the Ca(2+) binding site. A run of 14 beta stranded transmembrane segments spans residues 263–277, 279–296, 309–325, 328–337, 353–369, 371–381, 385–400, 403–417, 434–443, 449–458, 473–490, 494–509, 517–529, and 535–550; these read RKLY…LRYN, ELIK…KDYN, TLDE…NNVI, HGSIGAGVDW, YDQR…QQVG, FTFEGAARSDD, FGRH…WEFI, YRFI…KAPN, KSKQWEGAFE, VNWRISGYRN, YYNE…TANF, PLTH…ARNA, RRAK…QLDW, and DWGI…YDKD. T309 contacts cyanocob(III)alamin. Residue R517 participates in cyanocob(III)alamin binding. Position 551 (Y551) interacts with cyanocob(III)alamin. 3 beta stranded membrane-spanning segments follow: residues 558 to 572, 585 to 596, and 602 to 614; these read TVKM…LAVA, IANLFDKDYETV, and AGRE…SYTF. Residues 597–614 carry the TonB C-terminal box motif; it reads YGYQTAGREYTLSGSYTF.

Belongs to the TonB-dependent receptor family. BtuB (TC 1.B.14.3.1) subfamily.

Its subcellular location is the cell outer membrane. In terms of biological role, involved in the active translocation of vitamin B12 (cyanocobalamin) across the outer membrane to the periplasmic space. It derives its energy for transport by interacting with the trans-periplasmic membrane protein TonB. The chain is Vitamin B12 transporter BtuB from Shigella flexneri serotype 5b (strain 8401).